The chain runs to 112 residues: Large ribosomal subunit protein eL22 (112 aa).

It belongs to the eukaryotic ribosomal protein eL22 family. Component of the large ribosomal subunit.

The protein localises to the cytoplasm. This is Large ribosomal subunit protein eL22 (RPL22) from Encephalitozoon cuniculi (strain GB-M1) (Microsporidian parasite).